A 506-amino-acid polypeptide reads, in one-letter code: Glycine--tRNA ligase (506 aa).

Residues Arg99 and Glu189 each contribute to the substrate site. Residues 221–223, 231–236, 305–306, and 364–367 contribute to the ATP site; these read RNE, FRVREF, EL, and GVDR. 236-240 contacts substrate; the sequence is FEQME. 360 to 364 contributes to the substrate binding site; that stretch reads EPSAG.

Belongs to the class-II aminoacyl-tRNA synthetase family. In terms of assembly, homodimer.

The protein localises to the cytoplasm. It catalyses the reaction tRNA(Gly) + glycine + ATP = glycyl-tRNA(Gly) + AMP + diphosphate. In terms of biological role, catalyzes the attachment of glycine to tRNA(Gly). This chain is Glycine--tRNA ligase, found in Thermus thermophilus (strain ATCC BAA-163 / DSM 7039 / HB27).